Consider the following 352-residue polypeptide: tRNA-specific 2-thiouridylase MnmA (352 aa).

Residues 6–13 (AMSGGVDS) and Leu32 each bind ATP. Cys101 acts as the Nucleophile in catalysis. Cysteines 101 and 194 form a disulfide. Gly125 contacts ATP. The interval 144–146 (KDQ) is interaction with tRNA. Residue Cys194 is the Cysteine persulfide intermediate of the active site.

It belongs to the MnmA/TRMU family.

It localises to the cytoplasm. The catalysed reaction is S-sulfanyl-L-cysteinyl-[protein] + uridine(34) in tRNA + AH2 + ATP = 2-thiouridine(34) in tRNA + L-cysteinyl-[protein] + A + AMP + diphosphate + H(+). Its function is as follows. Catalyzes the 2-thiolation of uridine at the wobble position (U34) of tRNA, leading to the formation of s(2)U34. The protein is tRNA-specific 2-thiouridylase MnmA of Frankia casuarinae (strain DSM 45818 / CECT 9043 / HFP020203 / CcI3).